A 356-amino-acid chain; its full sequence is D-alanine--D-alanine ligase (356 aa).

Residues 134–339 (KQLFATRGLP…YSELITDLIN (206 aa)) enclose the ATP-grasp domain. 167–222 (EGKLTYPVFVKPANLGSSVGISKCTDSETLIHGIEEALQFDRKLVIEQGVNAREVE) serves as a coordination point for ATP. Residues D293, E306, and N308 each coordinate Mg(2+).

Belongs to the D-alanine--D-alanine ligase family. Mg(2+) is required as a cofactor. Requires Mn(2+) as cofactor.

The protein localises to the cytoplasm. It catalyses the reaction 2 D-alanine + ATP = D-alanyl-D-alanine + ADP + phosphate + H(+). Its pathway is cell wall biogenesis; peptidoglycan biosynthesis. Its function is as follows. Cell wall formation. The polypeptide is D-alanine--D-alanine ligase (Macrococcus caseolyticus (strain JCSC5402) (Macrococcoides caseolyticum)).